The following is a 152-amino-acid chain: Leptin (152 aa).

A signal peptide spans 1 to 26; that stretch reads MDHILALVLALLPLSLCVALPGALDA. Cys109 and Cys152 form a disulfide bridge.

Belongs to the leptin family. Expressed mostly in the liver.

It is found in the secreted. Its function is as follows. May function as part of a signaling pathway that acts to regulate the size of the body fat depot. In Takifugu rubripes (Japanese pufferfish), this protein is Leptin (lep).